Consider the following 175-residue polypeptide: Small ribosomal subunit protein bS16 (175 aa).

Belongs to the bacterial ribosomal protein bS16 family.

The polypeptide is Small ribosomal subunit protein bS16 (Cytophaga hutchinsonii (strain ATCC 33406 / DSM 1761 / CIP 103989 / NBRC 15051 / NCIMB 9469 / D465)).